The primary structure comprises 159 residues: NADH-quinone oxidoreductase subunit B (159 aa).

[4Fe-4S] cluster is bound by residues cysteine 36, cysteine 37, cysteine 102, and cysteine 132.

This sequence belongs to the complex I 20 kDa subunit family. As to quaternary structure, NDH-1 is composed of 14 different subunits. Subunits NuoB, C, D, E, F, and G constitute the peripheral sector of the complex. [4Fe-4S] cluster serves as cofactor.

The protein localises to the cell inner membrane. It catalyses the reaction a quinone + NADH + 5 H(+)(in) = a quinol + NAD(+) + 4 H(+)(out). NDH-1 shuttles electrons from NADH, via FMN and iron-sulfur (Fe-S) centers, to quinones in the respiratory chain. Couples the redox reaction to proton translocation (for every two electrons transferred, four hydrogen ions are translocated across the cytoplasmic membrane), and thus conserves the redox energy in a proton gradient. In Verminephrobacter eiseniae (strain EF01-2), this protein is NADH-quinone oxidoreductase subunit B.